Consider the following 165-residue polypeptide: MTTMTNSLISNSVSSVPESLFSSASIHRPVAINPAMLAQFSINLPVLPFESSASLGTSTTSSSRCSSTESSAAPGKIRRGRPQQEIADGQDAHSQKKRHRRLYARQYRAQMRQKVENVKSLHDEKEQLELEVKALRQAVSGLQQENAQKDFLISILQLNNQINHS.

The segment covering A53–S71 has biased composition (low complexity). The segment at A53–H99 is disordered. The stretch at A104 to D150 forms a coiled coil.

It is found in the nucleus. Transcription factor that regulates the expression of genes in response to changes in temperature. In particular, binds to the promoter region of genes such as asp-17 in response to severe cold to warm temperature transitions to promote gene expression. Promotes stress-induced death, particularly in older animals, following cold shock followed by warming and this may have evolved as a form of kin survival under thermal stress conditions, favoring the survival of younger animals. This chain is Transcription factor zip-10, found in Caenorhabditis elegans.